Reading from the N-terminus, the 481-residue chain is Glutamate--tRNA ligase (481 aa).

The 'HIGH' region motif lies at 9-19 (PSPTGNLHIGT). The 'KMSKS' region motif lies at 249 to 253 (KLSKR). Lysine 252 is a binding site for ATP.

This sequence belongs to the class-I aminoacyl-tRNA synthetase family. Glutamate--tRNA ligase type 1 subfamily. Monomer.

It is found in the cytoplasm. The enzyme catalyses tRNA(Glu) + L-glutamate + ATP = L-glutamyl-tRNA(Glu) + AMP + diphosphate. In terms of biological role, catalyzes the attachment of glutamate to tRNA(Glu) in a two-step reaction: glutamate is first activated by ATP to form Glu-AMP and then transferred to the acceptor end of tRNA(Glu). In Picosynechococcus sp. (strain ATCC 27264 / PCC 7002 / PR-6) (Agmenellum quadruplicatum), this protein is Glutamate--tRNA ligase.